Consider the following 580-residue polypeptide: Dihydroxy-acid dehydratase (580 aa).

Residues 1–31 (MPSGSSESPADALRASDSTPDIKPRSRDVTD) form a disordered region. Residues 20-31 (PDIKPRSRDVTD) show a composition bias toward basic and acidic residues. Cys-69 provides a ligand contact to [2Fe-2S] cluster. Asp-101 is a binding site for Mg(2+). Position 142 (Cys-142) interacts with [2Fe-2S] cluster. Residues Asp-143 and Lys-144 each coordinate Mg(2+). Lys-144 is subject to N6-carboxylysine. Cys-219 lines the [2Fe-2S] cluster pocket. Residue Glu-470 coordinates Mg(2+). Ser-496 (proton acceptor) is an active-site residue.

It belongs to the IlvD/Edd family. Homodimer. The cofactor is [2Fe-2S] cluster. Requires Mg(2+) as cofactor.

The catalysed reaction is (2R)-2,3-dihydroxy-3-methylbutanoate = 3-methyl-2-oxobutanoate + H2O. It carries out the reaction (2R,3R)-2,3-dihydroxy-3-methylpentanoate = (S)-3-methyl-2-oxopentanoate + H2O. It participates in amino-acid biosynthesis; L-isoleucine biosynthesis; L-isoleucine from 2-oxobutanoate: step 3/4. Its pathway is amino-acid biosynthesis; L-valine biosynthesis; L-valine from pyruvate: step 3/4. Functions in the biosynthesis of branched-chain amino acids. Catalyzes the dehydration of (2R,3R)-2,3-dihydroxy-3-methylpentanoate (2,3-dihydroxy-3-methylvalerate) into 2-oxo-3-methylpentanoate (2-oxo-3-methylvalerate) and of (2R)-2,3-dihydroxy-3-methylbutanoate (2,3-dihydroxyisovalerate) into 2-oxo-3-methylbutanoate (2-oxoisovalerate), the penultimate precursor to L-isoleucine and L-valine, respectively. The polypeptide is Dihydroxy-acid dehydratase (Mycobacterium sp. (strain JLS)).